The chain runs to 242 residues: B-box zinc finger protein 20 (242 aa).

Zn(2+)-binding residues include Cys-5, Cys-8, Cys-28, His-33, Cys-58, Cys-61, Cys-81, and His-91. A B box-type 1; atypical zinc finger spans residues 5–47; sequence CAVCDKEEASVFCCADEAALCNGCDRHVHFANKLAGKHLRFSL. A B box-type 2; atypical zinc finger spans residues 58 to 100; it reads CDICGERRALLFCQEDRAILCRECDIPIHQANEHTKKHNRFLL. A disordered region spans residues 112–153; it reads YPRASNSNSAAAFGRAKTRPKSVSSEVPSSASNEVFTSSSST. The span at 133–153 shows a compositional bias: low complexity; it reads SVSSEVPSSASNEVFTSSSST.

Interacts with MED25 and COP1. COP1-mediated ubiquitination and subsequent proteasomal degradation of BBX20 occurs in the dark.

It is found in the nucleus. Acts as a positive regulator of seedling photomorphogenesis. Plays a negative role in brassinosteroid responses. The sequence is that of B-box zinc finger protein 20 from Arabidopsis thaliana (Mouse-ear cress).